A 964-amino-acid polypeptide reads, in one-letter code: DNA mismatch repair protein MSH2 (964 aa).

Position 688–695 (688–695) interacts with ATP; the sequence is GPNMGGKS. Positions 851–964 are interaction with MSH6; that stretch reads DQSFGIHVAE…YLKYIKALLL (114 aa).

The protein belongs to the DNA mismatch repair MutS family. As to quaternary structure, heterodimer consisting of MSH2-MSH6 (MutS alpha) or MSH2-MSH3 (MutS beta). Both heterodimers form a ternary complex with MutL alpha (MLH1-PMS1). MutS beta also forms a ternary complex with MutL beta (MLH1-MLH3), and possibly with a MLH1-MLH2 heterodimer. Both heterodimers interact with proliferating cell nuclear antigen (PCNA/POL30). This interaction is disrupted upon binding of the MutS heterodimers to mismatch DNA. Interacts with SAW1.

The protein localises to the nucleus. Inhibited by Cd(2+). Its function is as follows. Component of the post-replicative DNA mismatch repair system (MMR). Forms two different heterodimers: MutS alpha (MSH2-MSH6 heterodimer) and MutS beta (MSH2-MSH3 heterodimer), which bind to DNA mismatches thereby initiating DNA repair. MSH2 seems to act as a scaffold for the other MutS homologs that provide substrate-binding and substrate specificity. When bound, heterodimers bend the DNA helix and shield approximately 20 base pairs. MutS alpha acts mainly to repair base-base and single insertion-deletion mismatches that occur during replication, but can also repair longer insertion-deletion loops (IDLs), although with decreasing efficiency as the size of the extrahelical loop increases. MutS beta acts mainly to repair IDLs from 2 to 13 nucleotides in size, but can also repair base-base and single insertion-deletion mismatches. After mismatch binding, MutS alpha or beta form a ternary complex with a MutL heterodimer, which is thought to be responsible for directing the downstream MMR events, including strand discrimination, excision, and resynthesis. ATP binding and hydrolysis play a pivotal role in mismatch repair functions. Both subunits bind ATP, but with differing affinities, and their ATPase kinetics are also very different. MSH6 binds and hydrolyzes ATP rapidly, whereas MSH2 catalyzes ATP at a substantially slower rate. Binding to a mismatched base pair suppresses MSH6-catalyzed ATP hydrolysis, but not the activity of MSH2. ATP binding to both subunits is necessary to trigger a change in MutS alpha interaction with mismatched DNA, converting MutS alpha into a sliding clamp capable of hydrolysis-independent movement along DNA, and also facilitates formation of ternary complexes containing MutS and MutL proteins and the mismatch. MutS beta also has a role in regulation of heteroduplex formation during mitotic and meiotic recombination. MutS beta binds to DNA flap structures predicted to form during recombination, and is required for 3' non-homologous tail removal (NHTR). MutS beta-binding alters the DNA conformation of its substrate at the ds/ssDNA junction and may facilitate its recognition and/or cleavage by the downstream nucleotide excision repair (NER) RAD1-RAD10 endonuclease. This Saccharomyces cerevisiae (strain ATCC 204508 / S288c) (Baker's yeast) protein is DNA mismatch repair protein MSH2 (MSH2).